The sequence spans 672 residues: Synaptotagmin-like protein 4 (672 aa).

The 119-residue stretch at 4 to 122 (ILDLSFLSEM…KATGDWFYDQ (119 aa)) folds into the RabBD domain. An FYVE-type zinc finger spans residues 63–105 (CARCQEGLGRLISKSNTCVGCNHLVCRECRVLESNGSWRCKVC). Positions 199–222 (SESLDSYTADSDSTSRRDSLDKSG) are disordered. Serine 201, serine 204, serine 217, serine 221, and serine 274 each carry phosphoserine. Residues 357–479 (VTGKIAFSLK…KLDKKLDHCL (123 aa)) form the C2 1 domain. Serine 489 carries the post-translational modification Phosphoserine. The 127-residue stretch at 508–634 (PASKLPVGGD…ISSGEVVDWM (127 aa)) folds into the C2 2 domain.

Part of a ternary complex containing STX1A and RAB27A. Can bind both dominant negative and dominant active mutants of RAB27A. Binds STXBP1, RAB3A, RAB8A and RAB27B. Interacts with MYO5A. As to expression, detected in insulin-secreting cell lines.

The protein resides in the membrane. It localises to the cytoplasmic vesicle. Its subcellular location is the secretory vesicle membrane. Functionally, modulates exocytosis of dense-core granules and secretion of hormones in the pancreas and the pituitary. Interacts with vesicles containing negatively charged phospholipids in a Ca(2+)-independent manner. The polypeptide is Synaptotagmin-like protein 4 (Sytl4) (Rattus norvegicus (Rat)).